Here is a 551-residue protein sequence, read N- to C-terminus: Arginine--tRNA ligase (551 aa).

Positions 123 to 133 (ANPTGPLTIGR) match the 'HIGH' region motif.

The protein belongs to the class-I aminoacyl-tRNA synthetase family. As to quaternary structure, monomer.

Its subcellular location is the cytoplasm. The enzyme catalyses tRNA(Arg) + L-arginine + ATP = L-arginyl-tRNA(Arg) + AMP + diphosphate. The protein is Arginine--tRNA ligase of Chlorobaculum tepidum (strain ATCC 49652 / DSM 12025 / NBRC 103806 / TLS) (Chlorobium tepidum).